The primary structure comprises 101 residues: UPF0751 protein DSY3086 (101 aa).

This sequence belongs to the UPF0751 family.

This is UPF0751 protein DSY3086 from Desulfitobacterium hafniense (strain Y51).